The sequence spans 215 residues: Small ribosomal subunit protein uS7 (215 aa).

Belongs to the universal ribosomal protein uS7 family. Part of the 30S ribosomal subunit.

Functionally, one of the primary rRNA binding proteins, it binds directly to 16S rRNA where it nucleates assembly of the head domain of the 30S subunit. Is located at the subunit interface close to the decoding center. This Thermococcus celer protein is Small ribosomal subunit protein uS7.